A 188-amino-acid chain; its full sequence is Peptidyl-tRNA hydrolase (188 aa).

Phe15 is a tRNA binding site. His20 serves as the catalytic Proton acceptor. Positions 64, 66, and 112 each coordinate tRNA.

This sequence belongs to the PTH family. Monomer.

Its subcellular location is the cytoplasm. The enzyme catalyses an N-acyl-L-alpha-aminoacyl-tRNA + H2O = an N-acyl-L-amino acid + a tRNA + H(+). Hydrolyzes ribosome-free peptidyl-tRNAs (with 1 or more amino acids incorporated), which drop off the ribosome during protein synthesis, or as a result of ribosome stalling. Its function is as follows. Catalyzes the release of premature peptidyl moieties from peptidyl-tRNA molecules trapped in stalled 50S ribosomal subunits, and thus maintains levels of free tRNAs and 50S ribosomes. In Borrelia duttonii (strain Ly), this protein is Peptidyl-tRNA hydrolase.